A 66-amino-acid polypeptide reads, in one-letter code: Large ribosomal subunit protein bL31 (66 aa).

Positions 16, 18, 36, and 39 each coordinate Zn(2+).

The protein belongs to the bacterial ribosomal protein bL31 family. Type A subfamily. Part of the 50S ribosomal subunit. Zn(2+) is required as a cofactor.

Its function is as follows. Binds the 23S rRNA. The sequence is that of Large ribosomal subunit protein bL31 from Moorella thermoacetica (strain ATCC 39073 / JCM 9320).